The primary structure comprises 77 residues: Acyl carrier protein (77 aa).

In terms of domain architecture, Carrier spans Ala-2–Leu-77. Ser-37 bears the O-(pantetheine 4'-phosphoryl)serine mark.

This sequence belongs to the acyl carrier protein (ACP) family. Post-translationally, 4'-phosphopantetheine is transferred from CoA to a specific serine of apo-ACP by AcpS. This modification is essential for activity because fatty acids are bound in thioester linkage to the sulfhydryl of the prosthetic group.

The protein resides in the cytoplasm. Its pathway is lipid metabolism; fatty acid biosynthesis. Its function is as follows. Carrier of the growing fatty acid chain in fatty acid biosynthesis. This Bacillus anthracis (strain A0248) protein is Acyl carrier protein.